The sequence spans 279 residues: tRNA uridine(34) hydroxylase (279 aa).

One can recognise a Rhodanese domain in the interval 126–221 (TKPGMHVIDT…YLQSVKGADS (96 aa)). The active-site Cysteine persulfide intermediate is the Cys-181.

It belongs to the TrhO family.

The catalysed reaction is uridine(34) in tRNA + AH2 + O2 = 5-hydroxyuridine(34) in tRNA + A + H2O. Catalyzes oxygen-dependent 5-hydroxyuridine (ho5U) modification at position 34 in tRNAs. The sequence is that of tRNA uridine(34) hydroxylase from Anaplasma phagocytophilum (strain HZ).